A 213-amino-acid polypeptide reads, in one-letter code: Ras-related protein Rab-25 (213 aa).

Residues Ser21, Gly24, Lys25, Thr26, Asn27, Ser38, His39, Thr43, and Thr44 each contribute to the GTP site. Thr26 is a Mg(2+) binding site. 2 short sequence motifs (switch) span residues 35–49 and 67–84; these read NEFS…GVEF and DTAG…YYRG. Thr44 and Asp67 together coordinate Mg(2+). GTP is bound by residues Gly70, Asn125, Lys126, Asp128, Ala156, and Leu157. 2 S-geranylgeranyl cysteine lipidation sites follow: Cys209 and Cys210. Cys210 carries the post-translational modification Cysteine methyl ester. Residues 211 to 213 constitute a propeptide, removed in mature form; the sequence is ISL.

Belongs to the small GTPase superfamily. Rab family. Interacts (GTP-bound form) with RAB11FIP1, RAB11FIP2, RAB11FIP3 and RAB11FIP4. Interacts (via the hypervariable C-terminal region) with ITGB1 (via the cytoplasmic region); the interaction is GTP-dependent. Interacts with ITGAV. Associates with the integrin alpha-V/beta-1 heterodimer. Interacts with VPS33B. The cofactor is Mg(2+).

The protein resides in the cell membrane. It is found in the cell projection. Its subcellular location is the pseudopodium membrane. The protein localises to the cytoplasmic vesicle. It catalyses the reaction GTP + H2O = GDP + phosphate + H(+). With respect to regulation, regulated by guanine nucleotide exchange factors (GEFs) which promote the exchange of bound GDP for free GTP. Regulated by GTPase activating proteins (GAPs) which increase the GTP hydrolysis activity. Inhibited by GDP dissociation inhibitors (GDIs) which prevent Rab-GDP dissociation. The small GTPases Rab are key regulators of intracellular membrane trafficking, from the formation of transport vesicles to their fusion with membranes. Rabs cycle between an inactive GDP-bound form and an active GTP-bound form that is able to recruit to membranes different set of downstream effectors directly responsible for vesicle formation, movement, tethering and fusion. RAB25 regulates epithelial cell differentiation, proliferation and survival, thereby playing key roles in tumorigenesis. Promotes invasive migration of cells in which it functions to localize and maintain integrin alpha-V/beta-1 at the tips of extending pseudopodia. Involved in the regulation of epithelial morphogenesis through the control of CLDN4 expression and localization at tight junctions. May selectively regulate the apical recycling pathway. Together with MYO5B regulates transcytosis. The sequence is that of Ras-related protein Rab-25 from Mus musculus (Mouse).